A 173-amino-acid chain; its full sequence is Photosystem I assembly protein Ycf3 (173 aa).

TPR repeat units follow at residues 35–68, 72–105, and 120–153; these read AFAY…EEDP, SYTF…NPKM, and GEQA…APDN.

This sequence belongs to the Ycf3 family.

It is found in the plastid. The protein localises to the cyanelle thylakoid membrane. Functionally, essential for the assembly of the photosystem I (PSI) complex. May act as a chaperone-like factor to guide the assembly of the PSI subunits. This chain is Photosystem I assembly protein Ycf3, found in Cyanophora paradoxa.